Here is a 96-residue protein sequence, read N- to C-terminus: Pterin-4-alpha-carbinolamine dehydratase (96 aa).

Belongs to the pterin-4-alpha-carbinolamine dehydratase family.

The protein resides in the spore wall. The enzyme catalyses (4aS,6R)-4a-hydroxy-L-erythro-5,6,7,8-tetrahydrobiopterin = (6R)-L-erythro-6,7-dihydrobiopterin + H2O. Has a role in spore wall formation. In Schizosaccharomyces pombe (strain 972 / ATCC 24843) (Fission yeast), this protein is Pterin-4-alpha-carbinolamine dehydratase (omt2).